A 259-amino-acid chain; its full sequence is uncharacterized protein (259 aa).

The region spanning 1-159 is the FAD-binding PCMH-type domain; that stretch reads MIEQFFRPDS…TEIIIKDPYR (159 aa).

This is an uncharacterized protein from Escherichia coli O157:H7.